The following is a 303-amino-acid chain: Taste receptor type 2 member 13 (303 aa).

At 1-7 the chain is on the extracellular side; it reads MESALPS. The chain crosses the membrane as a helical span at residues 8-28; that stretch reads IFTLVIIAEFIIGNLSNGFIV. At 29–55 the chain is on the cytoplasmic side; that stretch reads LINCIDWVSKRELSSVDKLLIILAISR. Residues 56–76 traverse the membrane as a helical segment; that stretch reads IGLIWEILVSWFLALHSLAIF. The Extracellular segment spans residues 77-85; the sequence is VSGTGLRIM. A helical membrane pass occupies residues 86 to 106; it reads IFSWIVSNHFNLWLATILSIF. Topologically, residues 107 to 128 are cytoplasmic; the sequence is YLLKIASFSSPAFLYLKRRVNK. Residues 129 to 149 traverse the membrane as a helical segment; it reads VILMILLGTLVFLFLNLIQIN. Over 150-184 the chain is Extracellular; that stretch reads MLIKDWLDRYERNTTWNFSMSDFETFSVSVRFTMT. Residues Asn162 and Asn166 are each glycosylated (N-linked (GlcNAc...) asparagine). The helical transmembrane segment at 185 to 205 threads the bilayer; it reads MFSLTPFTVAFISFLLLVFSL. Residues 206 to 232 lie on the Cytoplasmic side of the membrane; it reads QKHLQKMQLNYKGHRDPRTKVHTNALK. A helical membrane pass occupies residues 233-253; the sequence is IVISFLLFYASFFLSILISWI. Residues 254–261 are Extracellular-facing; the sequence is SELYQNTV. The helical transmembrane segment at 262-282 threads the bilayer; the sequence is IYMLCETIGAFYPSSHSFLLI. The Cytoplasmic segment spans residues 283-303; the sequence is LGNAKLRQAFLLVAAKVWAKR.

The protein belongs to the G-protein coupled receptor T2R family.

Its subcellular location is the membrane. Its function is as follows. Receptor that may play a role in the perception of bitterness and is gustducin-linked. May play a role in sensing the chemical composition of the gastrointestinal content. The activity of this receptor may stimulate alpha gustducin, mediate PLC-beta-2 activation and lead to the gating of TRPM5. The chain is Taste receptor type 2 member 13 (TAS2R13) from Pan paniscus (Pygmy chimpanzee).